The following is a 200-amino-acid chain: ATP-dependent Clp protease proteolytic subunit 3 (200 aa).

S101 serves as the catalytic Nucleophile. The active site involves H126.

The protein belongs to the peptidase S14 family. As to quaternary structure, fourteen ClpP subunits assemble into 2 heptameric rings which stack back to back to give a disk-like structure with a central cavity, resembling the structure of eukaryotic proteasomes.

It is found in the cytoplasm. The enzyme catalyses Hydrolysis of proteins to small peptides in the presence of ATP and magnesium. alpha-casein is the usual test substrate. In the absence of ATP, only oligopeptides shorter than five residues are hydrolyzed (such as succinyl-Leu-Tyr-|-NHMec, and Leu-Tyr-Leu-|-Tyr-Trp, in which cleavage of the -Tyr-|-Leu- and -Tyr-|-Trp bonds also occurs).. Cleaves peptides in various proteins in a process that requires ATP hydrolysis. Has a chymotrypsin-like activity. Plays a major role in the degradation of misfolded proteins. The polypeptide is ATP-dependent Clp protease proteolytic subunit 3 (Synechococcus sp. (strain CC9902)).